Consider the following 276-residue polypeptide: NADPH-dependent 7-cyano-7-deazaguanine reductase (276 aa).

83–85 contributes to the substrate binding site; it reads IES. 85-86 serves as a coordination point for NADPH; the sequence is SK. C184 serves as the catalytic Thioimide intermediate. D191 serves as the catalytic Proton donor. Residue 223 to 224 participates in substrate binding; sequence HE. 252-253 is an NADPH binding site; that stretch reads RG.

This sequence belongs to the GTP cyclohydrolase I family. QueF type 2 subfamily. As to quaternary structure, homodimer.

The protein resides in the cytoplasm. It carries out the reaction 7-aminomethyl-7-carbaguanine + 2 NADP(+) = 7-cyano-7-deazaguanine + 2 NADPH + 3 H(+). It participates in tRNA modification; tRNA-queuosine biosynthesis. In terms of biological role, catalyzes the NADPH-dependent reduction of 7-cyano-7-deazaguanine (preQ0) to 7-aminomethyl-7-deazaguanine (preQ1). In Pseudomonas putida (strain W619), this protein is NADPH-dependent 7-cyano-7-deazaguanine reductase.